A 66-amino-acid chain; its full sequence is Large ribosomal subunit protein bL35 (66 aa).

The segment covering M1–R16 has biased composition (basic residues). A disordered region spans residues M1–F28.

It belongs to the bacterial ribosomal protein bL35 family.

The sequence is that of Large ribosomal subunit protein bL35 from Staphylococcus epidermidis (strain ATCC 35984 / DSM 28319 / BCRC 17069 / CCUG 31568 / BM 3577 / RP62A).